Reading from the N-terminus, the 2067-residue chain is Non-reducing polyketide synthase PKS12 (2067 aa).

Residues 4-241 are N-terminal acylcarrier protein transacylase (SAT) domain; sequence FVFGDQSTRF…LPVPIYAPYH (238 aa). The tract at residues 350–373 is disordered; it reads NSMGPKASTSHSSAETQTESSSKN. The segment covering 356–373 has biased composition (polar residues); sequence ASTSHSSAETQTESSSKN. Positions 373–808 constitute a Ketosynthase family 3 (KS3) domain; it reads NSKIAIVAMS…GGNSAVLLQD (436 aa). Residues Cys-545, His-680, and His-725 each act as for beta-ketoacyl synthase activity in the active site. The malonyl-CoA:ACP transacylase (MAT) domain stretch occupies residues 912–1199; that stretch reads FVFSGQGAQY…VVCSTFLKSS (288 aa). Ser-1001 serves as the catalytic For acyl/malonyl transferase activity. The N-terminal hotdog fold stretch occupies residues 1297-1433; that stretch reads QKILQETSLD…CELRLEHPSQ (137 aa). A PKS/mFAS DH domain is found at 1297–1606; sequence QKILQETSLD…FQGLPRRVLN (310 aa). Catalysis depends on His-1329, which acts as the Proton acceptor; for dehydratase activity. The interval 1329–1604 is product template (PT) domain; the sequence is HRVNGVKVCT…ITFQGLPRRV (276 aa). Residues 1460–1606 form a C-terminal hotdog fold region; the sequence is LDSMLATGMV…FQGLPRRVLN (147 aa). The active-site Proton donor; for dehydratase activity is Asp-1519. Residues 1619 to 1648 are disordered; it reads APMGRRDVPPSRMDVPPVRSGEGPPTSAPT. Positions 1660–1738 constitute a Carrier domain; it reads TSMDSRLRPL…SFKLFLGLVD (79 aa). Ser-1698 is subject to O-(pantetheine 4'-phosphoryl)serine. A disordered region spans residues 1742 to 1779; sequence KSSSGSDGSGRSSPAPGIESGATTPPMSEEDQDKIVSS. Over residues 1743–1754 the composition is skewed to low complexity; it reads SSSGSDGSGRSS. The segment at 1781–2065 is claisen cyclase domain; that stretch reads SLHQFQASST…YVSAFLARAL (285 aa). Catalysis depends on Ser-1875, which acts as the For Claisen cyclase activity.

The enzyme catalyses 6 malonyl-CoA + acetyl-CoA + 6 H(+) = naphtopyrone YWA1 + 6 CO2 + 7 CoA + H2O. Its pathway is pigment biosynthesis. Non-reducing polyketide synthase; part of the gene cluster that mediates the biosynthesis of aurofusarin, a red mycelium pigment which is acting as a mycotoxin. The first step is performed by the polyketide synthase which condenses one acetyl-CoA and 6 malonyl-CoA units to form the first intermediate, the cyclic heptaketide and yellow pigment YWA1. The C2 hydroxyl group in the pyrone ring of YWA1 is probably formed during ring closure by an aldol-type cyclization reaction. The dehydratase aurZ then acts as the first tailoring enzyme in the aurofusarin biosynthetic pathway by converting YWA1 to nor-rubrofusarin. Nor-rubrofusarin is then methylated to rubrofusarin by the O-methyltransferase aurJ. Rubrofusarin is then transported across the plasma membrane by the rubrofusarin-specific pump aurT for further enzymatic processing by the extracellular complex composed of GIP1, aurF, aurO and aurS to yield aurofusarin. The protein is Non-reducing polyketide synthase PKS12 of Gibberella zeae (strain ATCC MYA-4620 / CBS 123657 / FGSC 9075 / NRRL 31084 / PH-1) (Wheat head blight fungus).